A 500-amino-acid polypeptide reads, in one-letter code: Polyenoic fatty acid isomerase (500 aa).

The first 21 residues, 1 to 21 (MSLNRVLHIFLIAYLACTALT), serve as a signal peptide directing secretion.

In terms of assembly, homodimer. An oxidized flavin serves as cofactor. Glycosylated.

It catalyses the reaction (5Z,8Z,11Z,14Z,17Z)-eicosapentaenoate = (5Z,7E,9E,14Z,17Z)-icosapentaenoate. Its function is as follows. Involved in the biosynthesis of conjugated triene-containing fatty acids. Catalyzes the isomerization of a wide range of substrates containing three or more methylene interrupted olefins into a Z,E,E conjugated triene functionality. May be involved in a stress tolerance mechanism as response to intertidal habitats with direct sunlight, desiccation and high temperature. In vitro substrates include arachidonic acid ((5Z,8Z,11Z,14Z)-eicosatetraenoic acid), EPA ((5Z,8Z, 11Z,14Z,17Z)-eicosapentaenoic acid), DHA ((4Z,7Z,10Z,13Z,16Z,19Z)-docosahexenoic acid), adrenic acid ((7Z,10Z,13Z,16Z)-docosatetraenoic acid), anandamide (arachidonyl-N-ethanolamide) and eicosatrienoic acid ((5Z,8Z,11Z)-eicosatrienoic acid). Gamma-linolenic acid (18:3 6Z,9Z,12Z) and dihomo-gamma-linolenic acid (20:3 8Z,11Z,14Z) are transformed into mixtures of conjugated diene and triene fatty acids, linoleic acid is only transformed to a conjugated diene. The sequence is that of Polyenoic fatty acid isomerase from Ptilota filicina (Red alga).